An 87-amino-acid polypeptide reads, in one-letter code: Small ribosomal subunit protein bS20 (87 aa).

Residues histidine 67–glutamine 87 are disordered.

This sequence belongs to the bacterial ribosomal protein bS20 family.

Its function is as follows. Binds directly to 16S ribosomal RNA. The sequence is that of Small ribosomal subunit protein bS20 from Metamycoplasma arthritidis (strain 158L3-1) (Mycoplasma arthritidis).